Here is a 315-residue protein sequence, read N- to C-terminus: Solute carrier family 25 member 32 (315 aa).

Solcar repeat units lie at residues 20 to 109 (HVRY…IKSY), 118 to 209 (LEAT…LKLK), and 222 to 306 (LSTV…VSHF). The next 6 membrane-spanning stretches (helical) occupy residues 26 to 43 (LVAGVSGGVLSNLALHPL), 89 to 106 (VWGAGLSWGLYFFFYNAI), 123 to 143 (YLVSAAEAGAMTLCITNPLWV), 186 to 203 (FVPGLFGTSHGALQFMAY), 227 to 243 (YISVAALSKIFAVAATY), and 281 to 300 (GIAPNLIRVTPACCITFVVY).

The protein belongs to the mitochondrial carrier (TC 2.A.29) family.

The protein resides in the mitochondrion inner membrane. The enzyme catalyses FAD(in) = FAD(out). Facilitates flavin adenine dinucleotide (FAD) translocation across the mitochondrial inner membrane into the mitochondrial matrix where it acts as a redox cofactor to assist flavoenzyme activities in fundamental metabolic processes including fatty acid beta-oxidation, amino acid and choline metabolism as well as mitochondrial electron transportation. In particular, provides FAD to DLD dehydrogenase of the glycine cleavage system, part of mitochondrial one-carbon metabolic pathway involved in neural tube closure in early embryogenesis. The protein is Solute carrier family 25 member 32 of Macaca fascicularis (Crab-eating macaque).